Reading from the N-terminus, the 57-residue chain is Large ribosomal subunit protein bL32c (57 aa).

Component of the chloroplast large ribosomal subunit (LSU). Mature 70S chloroplast ribosomes of higher plants consist of a small (30S) and a large (50S) subunit. The 30S small subunit contains 1 molecule of ribosomal RNA (16S rRNA) and 24 different proteins. The 50S large subunit contains 3 rRNA molecules (23S, 5S and 4.5S rRNA) and 33 different proteins.

Its subcellular location is the plastid. It localises to the chloroplast. Functionally, component of the chloroplast ribosome (chloro-ribosome), a dedicated translation machinery responsible for the synthesis of chloroplast genome-encoded proteins, including proteins of the transcription and translation machinery and components of the photosynthetic apparatus. The sequence is that of Large ribosomal subunit protein bL32c (rpl32) from Spinacia oleracea (Spinach).